Consider the following 294-residue polypeptide: Flavin-dependent thymidylate synthase (294 aa).

One can recognise a ThyX domain in the interval 27–250; sequence GFIRVIDYMG…PFTYEAFEEY (224 aa). Residues Thr73, 96-98, and Glu104 contribute to the FAD site; that span reads RHR. Residues 93 to 96, 104 to 108, and Arg189 each bind dUMP; these read QWIR and EYSAR. The short motif at 96 to 106 is the ThyX motif element; it reads RHRTASVNEYS. Residues 205–207 and His211 contribute to the FAD site; that span reads NLH. Position 216 (Arg216) interacts with dUMP. The active-site Involved in ionization of N3 of dUMP, leading to its activation is the Arg216.

Belongs to the thymidylate synthase ThyX family. Homotetramer. Requires FAD as cofactor.

It catalyses the reaction dUMP + (6R)-5,10-methylene-5,6,7,8-tetrahydrofolate + NADPH + H(+) = dTMP + (6S)-5,6,7,8-tetrahydrofolate + NADP(+). Its pathway is pyrimidine metabolism; dTTP biosynthesis. Its function is as follows. Catalyzes the reductive methylation of 2'-deoxyuridine-5'-monophosphate (dUMP) to 2'-deoxythymidine-5'-monophosphate (dTMP) while utilizing 5,10-methylenetetrahydrofolate (mTHF) as the methyl donor, and NADPH and FADH(2) as the reductant. The polypeptide is Flavin-dependent thymidylate synthase (Rickettsia prowazekii (strain Madrid E)).